The following is a 309-amino-acid chain: Mitogen-activated protein kinase kinase 8 (309 aa).

The Protein kinase domain occupies 53 to 305; it reads LDRISVLGSG…ASQLLNHPFL (253 aa). ATP-binding positions include 59–67 and K82; that span reads LGSGNGGTV. D167 functions as the Proton acceptor in the catalytic mechanism. Residues S195 and S201 each carry the phosphoserine modification. T205 carries the phosphothreonine modification.

It belongs to the protein kinase superfamily. STE Ser/Thr protein kinase family. MAP kinase kinase subfamily. Post-translationally, phosphorylation at Ser-195 and Ser-201 by MAP kinase kinase kinases positively regulates kinase activity.

It carries out the reaction L-seryl-[protein] + ATP = O-phospho-L-seryl-[protein] + ADP + H(+). The enzyme catalyses L-threonyl-[protein] + ATP = O-phospho-L-threonyl-[protein] + ADP + H(+). The catalysed reaction is L-tyrosyl-[protein] + ATP = O-phospho-L-tyrosyl-[protein] + ADP + H(+). The sequence is that of Mitogen-activated protein kinase kinase 8 (MKK8) from Arabidopsis thaliana (Mouse-ear cress).